The chain runs to 159 residues: Protein-export protein SecB (159 aa).

Belongs to the SecB family. In terms of assembly, homotetramer, a dimer of dimers. One homotetramer interacts with 1 SecA dimer.

Its subcellular location is the cytoplasm. Functionally, one of the proteins required for the normal export of preproteins out of the cell cytoplasm. It is a molecular chaperone that binds to a subset of precursor proteins, maintaining them in a translocation-competent state. It also specifically binds to its receptor SecA. In Nitrobacter hamburgensis (strain DSM 10229 / NCIMB 13809 / X14), this protein is Protein-export protein SecB.